We begin with the raw amino-acid sequence, 306 residues long: Cilia- and flagella-associated protein 73 (306 aa).

Coiled-coil stretches lie at residues 49-139 (LQAQ…QRLE) and 197-231 (QSEK…WESK).

It belongs to the CFAP73 family.

It is found in the cytoplasm. It localises to the cytoskeleton. The protein resides in the cilium axoneme. Functionally, may play a role in ciliary/flagellar motility by regulating the assembly and the activity of axonemal inner dynein arm. This chain is Cilia- and flagella-associated protein 73, found in Mus musculus (Mouse).